Reading from the N-terminus, the 102-residue chain is Small ribosomal subunit protein uS10 (102 aa).

It belongs to the universal ribosomal protein uS10 family. In terms of assembly, part of the 30S ribosomal subunit.

Its function is as follows. Involved in the binding of tRNA to the ribosomes. The chain is Small ribosomal subunit protein uS10 from Streptococcus pyogenes serotype M12 (strain MGAS2096).